The primary structure comprises 72 residues: MKVGIHPEYKAVKATCSCGNEFEFKSALGKDTIHLDVCGECHPFYTGKQRIVDTGGRVDRFNKRFGAIGSKK.

The Zn(2+) site is built by Cys-16, Cys-18, Cys-38, and Cys-41.

It belongs to the bacterial ribosomal protein bL31 family. Type A subfamily. As to quaternary structure, part of the 50S ribosomal subunit. Zn(2+) is required as a cofactor.

Binds the 23S rRNA. The sequence is that of Large ribosomal subunit protein bL31 from Aliivibrio salmonicida (strain LFI1238) (Vibrio salmonicida (strain LFI1238)).